The primary structure comprises 360 residues: 45 kDa calcium-binding protein (360 aa).

The signal sequence occupies residues 1-29 (MVSKQAFLFSLGSLYLSLLFVFLLMDVYA). Asparagine 33 carries N-linked (GlcNAc...) asparagine glycosylation. EF-hand domains are found at residues 96–131 (RNRRKLAAIFAKVDRNEDKQISANEMQRWIMEKTEE), 135–170 (EAVNENKLHFRAVDPDGDGHVSWDEYKIKFLASKGF), 231–266 (MLKFMVKEIIRDLDQDGDKKLTLSEFISLPVGTVEN), 276–311 (WVRDRKKEYEEVIDANHDGIVTMEELEEYMDPMNEY), and 312–347 (NALNEAKQMIAVADENQDHHLSLEEILKYSEYFTGS). Positions 109, 111, 113, 115, 120, 148, 150, 152, 154, 159, 244, 246, 248, 250, 255, 289, 291, 293, 300, 325, 327, 329, 331, and 336 each coordinate Ca(2+).

Belongs to the CREC family.

It is found in the golgi apparatus lumen. Its function is as follows. May regulate calcium-dependent activities in the endoplasmic reticulum lumen or post-ER compartment. The chain is 45 kDa calcium-binding protein (sdf4) from Xenopus tropicalis (Western clawed frog).